The primary structure comprises 336 residues: MGPITANSSKCATEDQMILQTSLLLRINVIIMTIVAIITFILTYKALFILKIRPIFHSSTKILLYTSLLFVNVHAVIFMVIQNTALIRSFTLSDKPCEIMRTTLECRFQNHVLIFGIAGVNFNQFGLTVDRLLATIIPQSYSHMGALPGVILSVLVVACSIAAPLIIAIGDPYDDIVPNCFFFPEHSAPRANIFLVTLSTLVITSIFLNFIIIYANKKLEKGCRTRFYVTQRYQKREALISTRIISYIAASQFLGLTLYSTMVLTLRLHKSMIPISIYHNMVWWAYTVPFAAVSLPALLIYRINQVGSNRKRVINRITAKVETQEEHMKSLKELWA.

Residues 1–28 (MGPITANSSKCATEDQMILQTSLLLRIN) are Extracellular-facing. A helical membrane pass occupies residues 29-49 (VIIMTIVAIITFILTYKALFI). Topologically, residues 50 to 61 (LKIRPIFHSSTK) are cytoplasmic. Residues 62–82 (ILLYTSLLFVNVHAVIFMVIQ) traverse the membrane as a helical segment. Residues 83–107 (NTALIRSFTLSDKPCEIMRTTLECR) lie on the Extracellular side of the membrane. A helical transmembrane segment spans residues 108–128 (FQNHVLIFGIAGVNFNQFGLT). Over 129–148 (VDRLLATIIPQSYSHMGALP) the chain is Cytoplasmic. Residues 149–169 (GVILSVLVVACSIAAPLIIAI) traverse the membrane as a helical segment. Residues 170–192 (GDPYDDIVPNCFFFPEHSAPRAN) are Extracellular-facing. A helical membrane pass occupies residues 193 to 213 (IFLVTLSTLVITSIFLNFIII). The Cytoplasmic portion of the chain corresponds to 214-243 (YANKKLEKGCRTRFYVTQRYQKREALISTR). The helical transmembrane segment at 244 to 264 (IISYIAASQFLGLTLYSTMVL) threads the bilayer. Residues 265-280 (TLRLHKSMIPISIYHN) are Extracellular-facing. A helical transmembrane segment spans residues 281–301 (MVWWAYTVPFAAVSLPALLIY). The Cytoplasmic segment spans residues 302-336 (RINQVGSNRKRVINRITAKVETQEEHMKSLKELWA).

The protein belongs to the nematode receptor-like protein sra family. In terms of tissue distribution, expressed in the URX sensory neuron, the ALA interneuron and in additional interneurons, pharyngeal neurons and muscle.

The protein localises to the membrane. The polypeptide is Serpentine receptor class alpha-10 (sra-10) (Caenorhabditis elegans).